The chain runs to 177 residues: uncharacterized protein (177 aa).

Composition is skewed to low complexity over residues 78 to 93 (NNNN…NTNN) and 120 to 130 (SDVNSNNNNGN). The disordered stretch occupies residues 78 to 146 (NNNNNNNNTI…NKKLKKDGTN (69 aa)). Over residues 131 to 146 (HQKKKINKKLKKDGTN) the composition is skewed to basic residues.

This is an uncharacterized protein from Dictyostelium discoideum (Social amoeba).